Reading from the N-terminus, the 543-residue chain is MDTIIMIPVATAIVSLLVGTVIGYAIRKHSWEQKVQNAQNDADHILADARAQVAAVKAEVNAQKQAAEAVKQSAENTKKEKILEAQEQIRDYKQKTEDKLNLKKDDLARQENRLKQREDTLDHKNSLLDEREAGLTKKEDQLKQQYTSLKAKLTEADELVEARRQKLYDVAKLDKEEAKKIVLNKLSDELVKERAELIRNSNEEVKAKADHYASQIIVDAIQSSAADTVAETTVSVVDLPNEEMKGRIIGREGRNIRSFEALTGIDLIIDDTPKVVTLSGFDPIRREIAKRAMERLIKDGRIHPARIEEMVDKARKEVNDDIYEAGESALMELGIHRMNPELVKTLGRLKYRTSYGQNVLSHSIEVGKLAGTMAAELGLDEKLAVRAGLLHDIGKAIDHDIEGSHVEIGVELTRKYHESDVVVNAIAAHHGDVPKLSFIAELVVAADTISSARPGARSESLENYIRRLTELEKIAKSYQGVKQAYAIQAGREVRVMVEPDEISDDRTVILARDIRNQVEKELDYPGNIKITVIREKRVVAIAK.

Residues 4 to 24 form a helical membrane-spanning segment; that stretch reads IIMIPVATAIVSLLVGTVIGY. One can recognise a KH domain in the interval 233-296; the sequence is TVSVVDLPNE…EIAKRAMERL (64 aa). One can recognise an HD domain in the interval 359-452; it reads VLSHSIEVGK…VVAADTISSA (94 aa).

This sequence belongs to the RNase Y family.

It is found in the cell membrane. Functionally, endoribonuclease that initiates mRNA decay. This Lactobacillus helveticus (strain DPC 4571) protein is Ribonuclease Y.